The sequence spans 158 residues: SsrA-binding protein (158 aa).

Residues 131 to 158 (KQLHDKRQTEKERDWNKQKQRILQTNQR) are disordered. Residues 132 to 147 (QLHDKRQTEKERDWNK) show a composition bias toward basic and acidic residues.

It belongs to the SmpB family.

The protein localises to the cytoplasm. In terms of biological role, required for rescue of stalled ribosomes mediated by trans-translation. Binds to transfer-messenger RNA (tmRNA), required for stable association of tmRNA with ribosomes. tmRNA and SmpB together mimic tRNA shape, replacing the anticodon stem-loop with SmpB. tmRNA is encoded by the ssrA gene; the 2 termini fold to resemble tRNA(Ala) and it encodes a 'tag peptide', a short internal open reading frame. During trans-translation Ala-aminoacylated tmRNA acts like a tRNA, entering the A-site of stalled ribosomes, displacing the stalled mRNA. The ribosome then switches to translate the ORF on the tmRNA; the nascent peptide is terminated with the 'tag peptide' encoded by the tmRNA and targeted for degradation. The ribosome is freed to recommence translation, which seems to be the essential function of trans-translation. The protein is SsrA-binding protein of Teredinibacter turnerae (strain ATCC 39867 / T7901).